A 357-amino-acid polypeptide reads, in one-letter code: Putative electron transport protein YccM (357 aa).

Over 1–36 the chain is Cytoplasmic; that stretch reads MAENKRTRWQRRPGTTGGKLPWNDWRNATTWRKATQ. Residues 37–54 form a helical membrane-spanning segment; it reads LLLLAMNIYIAITFWYWV. Over 55–91 the chain is Periplasmic; that stretch reads RYYETASSTTFVARPGGIEGWLPIAGLMNLKYSLVTG. Residues 92–114 traverse the membrane as a helical segment; the sequence is QLPSVHAAAMLLLVAFIVISLLL. The Cytoplasmic portion of the chain corresponds to 115 to 158; that stretch reads KKAFCSWLCPVGTLSELIGDLGNKLFGRQCVLPRWLDIPLRGVK. Residues 159–181 traverse the membrane as a helical segment; sequence YLLLSFFIYIALLMPAQAIHYFM. At 182 to 195 the chain is on the periplasmic side; that stretch reads LSPYSVVMDVKMLD. The helical transmembrane segment at 196–218 threads the bilayer; the sequence is FFRHMGTATLISVTVLLIASLFI. The Cytoplasmic portion of the chain corresponds to 219 to 309; the sequence is RHAWCRYLCP…KPAANKKAFA (91 aa). 4Fe-4S ferredoxin-type domains lie at 242 to 270 and 269 to 299; these read FKIR…VDKL and KLIQ…FSLQ. C251, C254, C257, C261, C278, C281, C284, and C288 together coordinate [4Fe-4S] cluster. Residues 310 to 332 form a helical membrane-spanning segment; it reads LSGWLMTLLVLGIMFAVIGYAMY. Over 333-357 the chain is Periplasmic; that stretch reads AGVWQSPVPEELYRRLIPQAPMIGH.

The protein resides in the cell inner membrane. This Escherichia coli (strain K12) protein is Putative electron transport protein YccM (yccM).